The following is a 364-amino-acid chain: A-type ATP synthase subunit C (364 aa).

The protein belongs to the V-ATPase V0D/AC39 subunit family. As to quaternary structure, has multiple subunits with at least A(3), B(3), C, D, E, F, H, I and proteolipid K(x).

The protein localises to the cell membrane. In terms of biological role, component of the A-type ATP synthase that produces ATP from ADP in the presence of a proton gradient across the membrane. This Desulfurococcus sp. (strain SY) protein is A-type ATP synthase subunit C.